Here is a 1637-residue protein sequence, read N- to C-terminus: Serine/threonine-protein kinase Genghis Khan (1637 aa).

Residues 100-369 (FDILKIIGRG…IQDFMDHPWF (270 aa)) enclose the Protein kinase domain. Residues 106-114 (IGRGAFGEV) and lysine 129 contribute to the ATP site. The active-site Proton acceptor is aspartate 224. The AGC-kinase C-terminal domain maps to 370–440 (VGIDWKNIRQ…SLTSSSTLDS (71 aa)). 3 coiled-coil regions span residues 473-587 (VDSV…EDAV), 643-688 (SEKL…LKYT), and 839-881 (DELS…DLQK). A disordered region spans residues 538–575 (RNQKQKLSRQVRDKEEELDGAMQKNDSLRNELRKSDKT). Residues 563 to 575 (DSLRNELRKSDKT) show a composition bias toward basic and acidic residues. The residue at position 895 (threonine 895) is a Phosphothreonine. The interval 952–971 (NNKDHSSMKEASVSDLSREE) is disordered. The Phorbol-ester/DAG-type zinc finger occupies 989–1039 (IHQFLVRTFSSPTKCNHCTSLMVGLTRQGVVCEICGFACHTICCQKVPTTC). The 119-residue stretch at 1059–1177 (GTAYEGYVKV…WVIALGELHR (119 aa)) folds into the PH domain. In terms of domain architecture, CNH spans 1203-1489 (IRNALCSVII…LPLNNLGNVV (287 aa)). A CRIB domain is found at 1546–1559 (ISAPTNFNHISHMG). The residue at position 1584 (serine 1584) is a Phosphoserine. The disordered stretch occupies residues 1611–1637 (DYGNDNIISRTPSPMASSFMDGLSNND). Polar residues predominate over residues 1616–1626 (NIISRTPSPMA).

It belongs to the protein kinase superfamily. AGC Ser/Thr protein kinase family. DMPK subfamily. Interacts tightly with GTP-bound but not GDP-bound Cdc42.

It carries out the reaction L-seryl-[protein] + ATP = O-phospho-L-seryl-[protein] + ADP + H(+). It catalyses the reaction L-threonyl-[protein] + ATP = O-phospho-L-threonyl-[protein] + ADP + H(+). In terms of biological role, acts as a downstream effector for the regulation of actin polymerization by Cdc42. The sequence is that of Serine/threonine-protein kinase Genghis Khan (gek) from Drosophila melanogaster (Fruit fly).